Consider the following 461-residue polypeptide: Protein-serine O-palmitoleoyltransferase porcupine (461 aa).

The Cytoplasmic portion of the chain corresponds to 1 to 17 (MATFSRQEFFQQLLQGC). A helical transmembrane segment spans residues 18-38 (LLPTVQQGLDQIWLLLTICFA). Residues 39–66 (CRLLWRLGLPSYLKHASTVAGGFFSLYH) lie on the Extracellular side of the membrane. A helical transmembrane segment spans residues 67–87 (FFQLHMVWVVLLSLLCYLVLF). The Cytoplasmic portion of the chain corresponds to 88–95 (LCRHSSHR). Residues 96–116 (GVFLSVTILIYLLMGEMHMVD) form a helical membrane-spanning segment. Topologically, residues 117–152 (TVTWHKMRGAQMIVAMKAVSLGFDLDRGEVGAVPSP) are extracellular. A helical membrane pass occupies residues 153 to 173 (VEFMGYLYFVGTIVFGPWISF). The Cytoplasmic segment spans residues 174–198 (HSYLQAVQGRPLSRRWLKKVARSLA). Residues 199 to 219 (LALLCLVLSTCVGPYLFPYFI) form a helical membrane-spanning segment. At 220-252 (PLDGDRLLRNKKRKARGTMVRWLRAYESAVSFH) the chain is on the extracellular side. Residues 253–273 (FSNYFVGFLSEATATLAGAGF) form a helical membrane-spanning segment. At 274 to 337 (TEEKDHLEWD…SAVLVTYAAS (64 aa)) the chain is on the cytoplasmic side. The chain crosses the membrane as a helical span at residues 338–358 (ALLHGFSFHLAAVLLSLAFIT). Residue H341 is part of the active site. Residues 359 to 396 (YVEHVLRKRLAQILSACILSKRCLPDCSHRHRLGLGVR) lie on the Extracellular side of the membrane. The helical transmembrane segment at 397–417 (ALNLLFGALAIFHLSYLGSLF) threads the bilayer. The Cytoplasmic portion of the chain corresponds to 418-461 (DVDVDDTTEEQGYGMAYTVHKWSELSWASHWVTFGCWIFYRLIG).

It belongs to the membrane-bound acyltransferase family. Porcupine subfamily. Interacts with WNT1, WNT3, WNT3A, WNT4, WNT5A, WNT5B, WNT6, WNT7A and WNT7B. In terms of tissue distribution, expressed in brain, heart, kidney, liver, lung, muscle, spleen and testis. Isoform 4 is strongly expressed in kidney, liver, lung, spleen and testis. Isoform 1 is strongly expressed in brain, heart and muscle and poorly in kidney, liver, lung, spleen and testis.

The protein resides in the endoplasmic reticulum membrane. The enzyme catalyses [Wnt protein]-L-serine + (9Z)-hexadecenoyl-CoA = [Wnt protein]-O-(9Z)-hexadecenoyl-L-serine + CoA. In terms of biological role, protein-serine O-palmitoleoyltransferase that acts as a key regulator of the Wnt signaling pathway by mediating the attachment of palmitoleate, a 16-carbon monounsaturated fatty acid (C16:1(9Z)), to Wnt proteins. Serine palmitoleoylation of WNT proteins is required for efficient binding to frizzled receptors. This is Protein-serine O-palmitoleoyltransferase porcupine from Mus musculus (Mouse).